The following is a 467-amino-acid chain: Asparagine--tRNA ligase (467 aa).

This sequence belongs to the class-II aminoacyl-tRNA synthetase family. Homodimer.

It localises to the cytoplasm. It carries out the reaction tRNA(Asn) + L-asparagine + ATP = L-asparaginyl-tRNA(Asn) + AMP + diphosphate + H(+). This is Asparagine--tRNA ligase from Bacteroides fragilis (strain ATCC 25285 / DSM 2151 / CCUG 4856 / JCM 11019 / LMG 10263 / NCTC 9343 / Onslow / VPI 2553 / EN-2).